A 255-amino-acid chain; its full sequence is Pimeloyl-[acyl-carrier protein] methyl ester esterase (255 aa).

In terms of domain architecture, AB hydrolase-1 spans 16 to 242 (LVLLHGWGLN…AAHAPFISHP (227 aa)). Residues Trp-22, 82-83 (SL), and 143-147 (FLALQ) each bind substrate. Ser-82 acts as the Nucleophile in catalysis. Residues Asp-207 and His-235 contribute to the active site. Residue His-235 participates in substrate binding.

Belongs to the AB hydrolase superfamily. Carboxylesterase BioH family. As to quaternary structure, monomer.

It is found in the cytoplasm. The catalysed reaction is 6-carboxyhexanoyl-[ACP] methyl ester + H2O = 6-carboxyhexanoyl-[ACP] + methanol + H(+). The protein operates within cofactor biosynthesis; biotin biosynthesis. Its function is as follows. The physiological role of BioH is to remove the methyl group introduced by BioC when the pimeloyl moiety is complete. It allows to synthesize pimeloyl-ACP via the fatty acid synthetic pathway through the hydrolysis of the ester bonds of pimeloyl-ACP esters. This chain is Pimeloyl-[acyl-carrier protein] methyl ester esterase, found in Pectobacterium atrosepticum (strain SCRI 1043 / ATCC BAA-672) (Erwinia carotovora subsp. atroseptica).